The sequence spans 343 residues: Protein RecA (343 aa).

Residue 64–71 (GPESSGKT) participates in ATP binding.

Belongs to the RecA family.

It is found in the cytoplasm. In terms of biological role, can catalyze the hydrolysis of ATP in the presence of single-stranded DNA, the ATP-dependent uptake of single-stranded DNA by duplex DNA, and the ATP-dependent hybridization of homologous single-stranded DNAs. It interacts with LexA causing its activation and leading to its autocatalytic cleavage. This chain is Protein RecA, found in Bacillus cereus (strain B4264).